The following is a 284-amino-acid chain: Phosphoenolpyruvate guanylyltransferase (284 aa).

A disordered region spans residues 94-123 (ADLSADEPAGTDAERRADPSAENRASTSAQ). Positions 105–114 (DAERRADPSA) are enriched in basic and acidic residues. Thr203, Gly219, and Ser222 together coordinate phosphoenolpyruvate.

Belongs to the CofC family.

The catalysed reaction is phosphoenolpyruvate + GTP + H(+) = enolpyruvoyl-2-diphospho-5'-guanosine + diphosphate. It participates in cofactor biosynthesis; coenzyme F420 biosynthesis. Its function is as follows. Guanylyltransferase that catalyzes the activation of phosphoenolpyruvate (PEP) as enolpyruvoyl-2-diphospho-5'-guanosine, via the condensation of PEP with GTP. It is involved in the biosynthesis of coenzyme F420, a hydride carrier cofactor. The protein is Phosphoenolpyruvate guanylyltransferase of Sanguibacter keddieii (strain ATCC 51767 / DSM 10542 / NCFB 3025 / ST-74).